Consider the following 511-residue polypeptide: Probable mannosyl-oligosaccharide alpha-1,2-mannosidase 1B (511 aa).

Positions 1 to 18 (MHLPSLSLAWALAGSSLA) are cleaved as a signal peptide. N-linked (GlcNAc...) asparagine glycans are attached at residues asparagine 90 and asparagine 177. A disulfide bridge connects residues cysteine 327 and cysteine 356. Glutamate 370 functions as the Proton donor in the catalytic mechanism. Asparagine 433 carries an N-linked (GlcNAc...) asparagine glycan. Residue threonine 501 participates in Ca(2+) binding.

The protein belongs to the glycosyl hydrolase 47 family. As to quaternary structure, monomer. Requires Ca(2+) as cofactor. Mg(2+) serves as cofactor.

Its subcellular location is the cytoplasmic vesicle lumen. It catalyses the reaction N(4)-(alpha-D-Man-(1-&gt;2)-alpha-D-Man-(1-&gt;2)-alpha-D-Man-(1-&gt;3)-[alpha-D-Man-(1-&gt;2)-alpha-D-Man-(1-&gt;3)-[alpha-D-Man-(1-&gt;2)-alpha-D-Man-(1-&gt;6)]-alpha-D-Man-(1-&gt;6)]-beta-D-Man-(1-&gt;4)-beta-D-GlcNAc-(1-&gt;4)-beta-D-GlcNAc)-L-asparaginyl-[protein] (N-glucan mannose isomer 9A1,2,3B1,2,3) + 4 H2O = N(4)-(alpha-D-Man-(1-&gt;3)-[alpha-D-Man-(1-&gt;3)-[alpha-D-Man-(1-&gt;6)]-alpha-D-Man-(1-&gt;6)]-beta-D-Man-(1-&gt;4)-beta-D-GlcNAc-(1-&gt;4)-beta-D-GlcNAc)-L-asparaginyl-[protein] (N-glucan mannose isomer 5A1,2) + 4 beta-D-mannose. It carries out the reaction N(4)-(alpha-D-Man-(1-&gt;2)-alpha-D-Man-(1-&gt;2)-alpha-D-Man-(1-&gt;3)-[alpha-D-Man-(1-&gt;3)-[alpha-D-Man-(1-&gt;2)-alpha-D-Man-(1-&gt;6)]-alpha-D-Man-(1-&gt;6)]-beta-D-Man-(1-&gt;4)-beta-D-GlcNAc-(1-&gt;4)-beta-D-GlcNAc)-L-asparaginyl-[protein] (N-glucan mannose isomer 8A1,2,3B1,3) + 3 H2O = N(4)-(alpha-D-Man-(1-&gt;3)-[alpha-D-Man-(1-&gt;3)-[alpha-D-Man-(1-&gt;6)]-alpha-D-Man-(1-&gt;6)]-beta-D-Man-(1-&gt;4)-beta-D-GlcNAc-(1-&gt;4)-beta-D-GlcNAc)-L-asparaginyl-[protein] (N-glucan mannose isomer 5A1,2) + 3 beta-D-mannose. It participates in protein modification; protein glycosylation. Its function is as follows. Involved in the maturation of Asn-linked oligosaccharides. Progressively trims alpha-1,2-linked mannose residues from Man(9)GlcNAc(2) to produce Man(5)GlcNAc(2). The protein is Probable mannosyl-oligosaccharide alpha-1,2-mannosidase 1B (mns1B) of Aspergillus clavatus (strain ATCC 1007 / CBS 513.65 / DSM 816 / NCTC 3887 / NRRL 1 / QM 1276 / 107).